The sequence spans 425 residues: High-affinity branched-chain amino acid transport system permease protein LivM (425 aa).

Transmembrane regions (helical) follow at residues 6-26 (IAMA…FMGV), 45-65 (WQWV…RPAF), 92-112 (FLVA…RGTV), 120-140 (IYII…LLVL), 145-165 (FYAI…LGFW), 167-187 (CLPI…FPVL), 191-211 (GDYL…LLLN), 260-280 (RVIF…FVIN), 311-331 (IKLT…TLFA), 353-373 (IVVL…ILLV), and 387-407 (MLML…GLLP).

This sequence belongs to the binding-protein-dependent transport system permease family. LivHM subfamily.

The protein localises to the cell inner membrane. Part of the binding-protein-dependent transport system for branched-chain amino acids. Probably responsible for the translocation of the substrates across the membrane. This is High-affinity branched-chain amino acid transport system permease protein LivM (livM) from Escherichia coli (strain K12).